We begin with the raw amino-acid sequence, 271 residues long: ATP synthase subunit a (271 aa).

A run of 5 helical transmembrane segments spans residues 40-60 (TINIDSMFFSVVLGLLFLVLF), 100-120 (LIAPLALTIFVWVFLMNLMDL), 146-166 (DVNVTLSMALGVFILILFYSI), 220-240 (LIFILIAGLLPWWSQWILNVP), and 242-262 (AIFHILIITLQAFIFMVLTIV).

This sequence belongs to the ATPase A chain family. F-type ATPases have 2 components, CF(1) - the catalytic core - and CF(0) - the membrane proton channel. CF(1) has five subunits: alpha(3), beta(3), gamma(1), delta(1), epsilon(1). CF(0) has three main subunits: a(1), b(2) and c(9-12). The alpha and beta chains form an alternating ring which encloses part of the gamma chain. CF(1) is attached to CF(0) by a central stalk formed by the gamma and epsilon chains, while a peripheral stalk is formed by the delta and b chains.

The protein resides in the cell inner membrane. Its function is as follows. Key component of the proton channel; it plays a direct role in the translocation of protons across the membrane. This is ATP synthase subunit a from Escherichia coli O8 (strain IAI1).